Reading from the N-terminus, the 117-residue chain is Large ribosomal subunit protein uL18 (117 aa).

Belongs to the universal ribosomal protein uL18 family. Part of the 50S ribosomal subunit; part of the 5S rRNA/L5/L18/L25 subcomplex. Contacts the 5S and 23S rRNAs.

This is one of the proteins that bind and probably mediate the attachment of the 5S RNA into the large ribosomal subunit, where it forms part of the central protuberance. The polypeptide is Large ribosomal subunit protein uL18 (Sphingopyxis alaskensis (strain DSM 13593 / LMG 18877 / RB2256) (Sphingomonas alaskensis)).